We begin with the raw amino-acid sequence, 640 residues long: Probable potassium transport system protein Kup 2 (640 aa).

A run of 12 helical transmembrane segments spans residues 19–39 (LFSSTTFLLALGSLGVVYGDI), 67–87 (VLSLVFWSMTMVICVKYVVFV), 118–138 (GVVAFAATLGASLLYGDGVIT), 155–175 (EAAKPLVVPLTCVVLLALFLV), 181–201 (GVIGNVFGPIMIVWFVTIAAL), 230–250 (FVGVVVLGSVVLCITGGEALY), 265–285 (WLGLAFPALLLNYFGQGALLL), 307–327 (MVCLSTIATVIASQAMISGVF), 355–375 (VYIPEVNYLLMIACLGLVLVF), 384–404 (AYGIAVTADMALTSILFFFVI), 415–435 (AVPLLVLFLFFDLSYFGANLF), and 437–457 (IFDGGWITLTIAAIVATSMIT).

This sequence belongs to the HAK/KUP transporter (TC 2.A.72) family.

The protein resides in the cell inner membrane. The enzyme catalyses K(+)(in) + H(+)(in) = K(+)(out) + H(+)(out). Transport of potassium into the cell. Likely operates as a K(+):H(+) symporter. The chain is Probable potassium transport system protein Kup 2 from Syntrophobacter fumaroxidans (strain DSM 10017 / MPOB).